A 226-amino-acid chain; its full sequence is 7-cyano-7-deazaguanine synthase (226 aa).

7–17 lines the ATP pocket; it reads LSGGMDSLVTT. Zn(2+) is bound by residues C187, C195, C198, and C201.

The protein belongs to the QueC family. Zn(2+) is required as a cofactor.

It catalyses the reaction 7-carboxy-7-deazaguanine + NH4(+) + ATP = 7-cyano-7-deazaguanine + ADP + phosphate + H2O + H(+). Its pathway is purine metabolism; 7-cyano-7-deazaguanine biosynthesis. In terms of biological role, catalyzes the ATP-dependent conversion of 7-carboxy-7-deazaguanine (CDG) to 7-cyano-7-deazaguanine (preQ(0)). This Chloroherpeton thalassium (strain ATCC 35110 / GB-78) protein is 7-cyano-7-deazaguanine synthase.